The sequence spans 316 residues: Homoserine kinase (316 aa).

Position 96–106 (proline 96–alanine 106) interacts with ATP.

It belongs to the GHMP kinase family. Homoserine kinase subfamily.

Its subcellular location is the cytoplasm. It catalyses the reaction L-homoserine + ATP = O-phospho-L-homoserine + ADP + H(+). It participates in amino-acid biosynthesis; L-threonine biosynthesis; L-threonine from L-aspartate: step 4/5. Catalyzes the ATP-dependent phosphorylation of L-homoserine to L-homoserine phosphate. The protein is Homoserine kinase of Clavibacter michiganensis subsp. michiganensis (strain NCPPB 382).